Consider the following 1024-residue polypeptide: Beta-galactosidase (1024 aa).

The substrate site is built by Asn103 and Asp202. Residue Asp202 coordinates Na(+). 3 residues coordinate Mg(2+): Glu417, His419, and Glu462. Substrate contacts are provided by residues Glu462 and 538–541 (EYAH). The Proton donor role is filled by Glu462. Residue Glu538 is the Nucleophile of the active site. Asn598 serves as a coordination point for Mg(2+). 2 residues coordinate Na(+): Phe602 and Asn605. Residues Asn605 and Trp1000 each contribute to the substrate site.

The protein belongs to the glycosyl hydrolase 2 family. As to quaternary structure, homotetramer. The cofactor is Mg(2+). Requires Na(+) as cofactor.

It catalyses the reaction Hydrolysis of terminal non-reducing beta-D-galactose residues in beta-D-galactosides.. The chain is Beta-galactosidase from Escherichia coli O6:K15:H31 (strain 536 / UPEC).